A 204-amino-acid polypeptide reads, in one-letter code: MIGRLRGIILEKQPPLVLLETNGVGYEVQLPMTCFYELPELGQEAIIFTQFVVREDAQLLYGFNNKQERALFRELIKVNGVGPKLALAILSGMSAQQFVGAVEREDITTLVKLPGVGKKTAERLVVEMKDRFKGLNGDLFNNTGDISLPTASPQTSDADIEAEAASALVALGYKPQEASRLVSKIAKPGADCETLIRDALRAAL.

Residues 1-64 are domain I; it reads MIGRLRGIIL…EDAQLLYGFN (64 aa). The domain II stretch occupies residues 65–142; sequence NKQERALFRE…KGLNGDLFNN (78 aa). Residues 143–155 are flexible linker; sequence TGDISLPTASPQT. Positions 156-204 are domain III; that stretch reads SDADIEAEAASALVALGYKPQEASRLVSKIAKPGADCETLIRDALRAAL.

The protein belongs to the RuvA family. As to quaternary structure, homotetramer. Forms an RuvA(8)-RuvB(12)-Holliday junction (HJ) complex. HJ DNA is sandwiched between 2 RuvA tetramers; dsDNA enters through RuvA and exits via RuvB. An RuvB hexamer assembles on each DNA strand where it exits the tetramer. Each RuvB hexamer is contacted by two RuvA subunits (via domain III) on 2 adjacent RuvB subunits; this complex drives branch migration. In the full resolvosome a probable DNA-RuvA(4)-RuvB(12)-RuvC(2) complex forms which resolves the HJ.

Its subcellular location is the cytoplasm. Its function is as follows. The RuvA-RuvB-RuvC complex processes Holliday junction (HJ) DNA during genetic recombination and DNA repair, while the RuvA-RuvB complex plays an important role in the rescue of blocked DNA replication forks via replication fork reversal (RFR). RuvA specifically binds to HJ cruciform DNA, conferring on it an open structure. The RuvB hexamer acts as an ATP-dependent pump, pulling dsDNA into and through the RuvAB complex. HJ branch migration allows RuvC to scan DNA until it finds its consensus sequence, where it cleaves and resolves the cruciform DNA. This Yersinia pseudotuberculosis serotype O:1b (strain IP 31758) protein is Holliday junction branch migration complex subunit RuvA.